We begin with the raw amino-acid sequence, 540 residues long: Chaperonin GroEL (540 aa).

ATP-binding positions include 29 to 32, 86 to 90, Gly-413, 476 to 478, and Asp-492; these read TLGP, DGTTT, and NAA.

It belongs to the chaperonin (HSP60) family. Forms a cylinder of 14 subunits composed of two heptameric rings stacked back-to-back. Interacts with the co-chaperonin GroES.

It is found in the cytoplasm. The catalysed reaction is ATP + H2O + a folded polypeptide = ADP + phosphate + an unfolded polypeptide.. Functionally, together with its co-chaperonin GroES, plays an essential role in assisting protein folding. The GroEL-GroES system forms a nano-cage that allows encapsulation of the non-native substrate proteins and provides a physical environment optimized to promote and accelerate protein folding. This chain is Chaperonin GroEL, found in Streptococcus pneumoniae (strain P1031).